The sequence spans 629 residues: tRNA uridine 5-carboxymethylaminomethyl modification enzyme MnmG (629 aa).

FAD-binding positions include 13 to 18 (GGGHAG), Val-125, and Ser-180. NAD(+) is bound at residue 273-287 (GPRYCPSIEDKVMRF). Residue Gln-370 coordinates FAD.

This sequence belongs to the MnmG family. As to quaternary structure, homodimer. Heterotetramer of two MnmE and two MnmG subunits. FAD serves as cofactor.

Its subcellular location is the cytoplasm. NAD-binding protein involved in the addition of a carboxymethylaminomethyl (cmnm) group at the wobble position (U34) of certain tRNAs, forming tRNA-cmnm(5)s(2)U34. This chain is tRNA uridine 5-carboxymethylaminomethyl modification enzyme MnmG, found in Salmonella dublin (strain CT_02021853).